The chain runs to 155 residues: Ribosomal RNA large subunit methyltransferase H (155 aa).

S-adenosyl-L-methionine is bound by residues L72, G103, and 122-127 (LSALTL).

This sequence belongs to the RNA methyltransferase RlmH family. Homodimer.

It is found in the cytoplasm. The enzyme catalyses pseudouridine(1915) in 23S rRNA + S-adenosyl-L-methionine = N(3)-methylpseudouridine(1915) in 23S rRNA + S-adenosyl-L-homocysteine + H(+). Its function is as follows. Specifically methylates the pseudouridine at position 1915 (m3Psi1915) in 23S rRNA. The protein is Ribosomal RNA large subunit methyltransferase H of Cronobacter sakazakii (strain ATCC BAA-894) (Enterobacter sakazakii).